The primary structure comprises 61 residues: Large ribosomal subunit protein eL20 (61 aa).

It belongs to the eukaryotic ribosomal protein eL20 family. In terms of assembly, part of the 50S ribosomal subunit. Binds 23S rRNA.

This is Large ribosomal subunit protein eL20 from Methanosarcina mazei (strain ATCC BAA-159 / DSM 3647 / Goe1 / Go1 / JCM 11833 / OCM 88) (Methanosarcina frisia).